Here is a 456-residue protein sequence, read N- to C-terminus: RNA polymerase II-associated protein 1 homolog (456 aa).

Residues 382 to 456 (LRSVEGSLNE…PVEQLQNEED (75 aa)) are disordered. Phosphoserine is present on Ser388. Residues 396–406 (EEKPAESREQL) show a composition bias toward basic and acidic residues. Composition is skewed to polar residues over residues 408–433 (SAEQTNGVKPETQAQNMSASESQANS) and 441–456 (GNTQPSPVEQLQNEED).

Belongs to the PAF1 family.

The protein localises to the cytoplasm. It is found in the nucleus. The polypeptide is RNA polymerase II-associated protein 1 homolog (Schizosaccharomyces pombe (strain 972 / ATCC 24843) (Fission yeast)).